Reading from the N-terminus, the 1657-residue chain is Ras GTPase-activating-like protein IQGAP1 (1657 aa).

S2 carries the post-translational modification N-acetylserine. S2 carries the phosphoserine modification. A Calponin-homology (CH) domain is found at 44–159 (LCHLEEAKRW…YCIHALSLYL (116 aa)). Position 172 is a phosphotyrosine (Y172). S330 bears the Phosphoserine mark. The 34-residue stretch at 679 to 712 (GDNNSKWVKHWVKGGYYYYHNLETQEGGWDEPPN) folds into the WW domain. IQ domains lie at 745–774 (NEGL…FLKK), 775–804 (QIPA…YLRS), 805–834 (HKDE…YFRD), and 835–864 (HIND…AEDP). A C1 region spans residues 956–1274 (GGLKALSKEK…FFQTACDVPE (319 aa)). The 250-residue stretch at 1020 to 1269 (YLLLRLFKTA…QKFRRFFQTA (250 aa)) folds into the Ras-GAP domain. Residues 1276-1657 (QDKFNVDEYS…FLLNKKFYGK (382 aa)) form a C2 region. The segment at 1410 to 1448 (TPATSEQEAEHQRAMQRRAIRDAKTPDKMKKSKSVKEDS) is disordered. Over residues 1417–1448 (EAEHQRAMQRRAIRDAKTPDKMKKSKSVKEDS) the composition is skewed to basic and acidic residues. Phosphoserine; by PKC is present on S1441. S1443 is modified (phosphoserine; by PKC/PRKCE).

As to quaternary structure, interacts with CDC42; the interaction is demonstrated with IQGAP1 in GTP-bound and in nucleotide-free state. Interacts with RAC1. Does not interact with RHOA. Interacts with TSG101. Interacts with PAK6. Interacts with TMEM14B; this interaction increases IQGAP1 phosphorylation and induces its nuclear translocation. Interacts with SASH1. Interacts with PJVK. Interacts with SLC26A4; this interaction enhances the chloride-bicarbonate exchange activity of SLC26A4. Interacts with SVEP1. Interacts with ILK; the interaction is required for localization of IQGAP to the cell cortex. In terms of assembly, (Microbial infection) Interacts with ebolavirus vp40. (Microbial infection) Interacts with human cytomegalovirus protein UL5. As to quaternary structure, (Microbial infection) Interacts with C.jejuni invasion antigen D (CiaD). In terms of processing, phosphorylation of Ser-1443 by PKC/PRKCE prevents interaction between C1 and C2, allowing binding of nucleotide-free CDC42. Ser-1443 phosphorylation enhances the ability to promote neurite outgrowth. In terms of tissue distribution, expressed in the placenta, lung, and kidney. A lower level expression is seen in the heart, liver, skeletal muscle and pancreas.

It is found in the cell membrane. The protein localises to the nucleus. The protein resides in the cytoplasm. Its subcellular location is the cell cortex. It localises to the apical cell membrane. It is found in the basolateral cell membrane. In terms of biological role, plays a crucial role in regulating the dynamics and assembly of the actin cytoskeleton. Recruited to the cell cortex by interaction with ILK which allows it to cooperate with its effector DIAPH1 to locally stabilize microtubules and allow stable insertion of caveolae into the plasma membrane. Binds to activated CDC42 but does not stimulate its GTPase activity. Associates with calmodulin. May promote neurite outgrowth. May play a possible role in cell cycle regulation by contributing to cell cycle progression after DNA replication arrest. This chain is Ras GTPase-activating-like protein IQGAP1 (IQGAP1), found in Homo sapiens (Human).